The following is a 327-amino-acid chain: Biotin synthase (327 aa).

The Radical SAM core domain maps to 49–282 (FNKDKIDLCS…NKVIRLCGGR (234 aa)). [4Fe-4S] cluster is bound by residues Cys-67, Cys-71, and Cys-74. [2Fe-2S] cluster is bound by residues Ser-110, Cys-142, Cys-201, and Arg-277.

It belongs to the radical SAM superfamily. Biotin synthase family. Homodimer. [4Fe-4S] cluster serves as cofactor. Requires [2Fe-2S] cluster as cofactor.

The enzyme catalyses (4R,5S)-dethiobiotin + (sulfur carrier)-SH + 2 reduced [2Fe-2S]-[ferredoxin] + 2 S-adenosyl-L-methionine = (sulfur carrier)-H + biotin + 2 5'-deoxyadenosine + 2 L-methionine + 2 oxidized [2Fe-2S]-[ferredoxin]. It functions in the pathway cofactor biosynthesis; biotin biosynthesis; biotin from 7,8-diaminononanoate: step 2/2. In terms of biological role, catalyzes the conversion of dethiobiotin (DTB) to biotin by the insertion of a sulfur atom into dethiobiotin via a radical-based mechanism. The protein is Biotin synthase of Methanococcus maripaludis (strain C5 / ATCC BAA-1333).